Here is an 889-residue protein sequence, read N- to C-terminus: Oxysterol-binding protein-related protein 8 (889 aa).

N-acetylmethionine is present on Met1. The tract at residues 1–129 is disordered; sequence MEGGLADGEP…SLKVQKKNYR (129 aa). Residue Ser14 is modified to Phosphoserine. 2 stretches are compositionally biased toward polar residues: residues 28–46 and 62–71; these read VVANSDESQLLTPGKMSQR and PSLSPASPHS. 2 positions are modified to phosphoserine: Ser65 and Ser68. Basic and acidic residues-rich tracts occupy residues 73–88, 95–109, and 116–129; these read GFERGKEDISQNKDES, SKSESKLYNGSEKDS, and TKKESLKVQKKNYR. The PH domain occupies 148–265; the sequence is VIVMADWLKI…WMDALELALK (118 aa). Phosphoserine is present on residues Ser314, Ser328, and Ser342. The segment covering 322-336 has biased composition (basic and acidic residues); that stretch reads KDQDMYSDKSDKEND. The segment at 322–399 is disordered; sequence KDQDMYSDKS…AGEASQTETV (78 aa). Residues 346–363 show a composition bias toward basic and acidic residues; it reads VMGKSEESDTDTSERQDD. A 1,2-diacyl-sn-glycero-3-phospho-(1D-myo-inositol 4-phosphate) is bound by residues 420-425, 482-485, and 514-515; these read LSKVVL, KPYN, and HH. A 1,2-diacyl-sn-glycero-3-phospho-L-serine contacts are provided by residues 420 to 425 and Asn485; that span reads LSKVVL. Ser540 serves as a coordination point for a 1,2-diacyl-sn-glycero-3-phospho-L-serine. 3 residues coordinate a 1,2-diacyl-sn-glycero-3-phospho-(1D-myo-inositol 4-phosphate): Lys706, Glu710, and Arg714. The interval 771-823 is disordered; sequence KHRTPMVSVPKMKHKPTRQQKKVAKGYSSPEPDIQDSSGSEAQSVKPSTRRKK. Positions 781-794 are enriched in basic residues; sequence KMKHKPTRQQKKVA. The segment covering 805–817 has biased composition (polar residues); sequence QDSSGSEAQSVKP. Residues Ser807, Ser808, Ser810, and Ser814 each carry the phosphoserine modification. The chain crosses the membrane as a helical span at residues 871–888; that stretch reads YFIIFLLILLQVIINFMF.

The protein belongs to the OSBP family. Interacts with SPAG5. Interacts with NUP62. In terms of tissue distribution, widely expressed. Expressed at higher level in macrophages.

It localises to the endoplasmic reticulum membrane. The protein localises to the nucleus membrane. Its function is as follows. Lipid transporter involved in lipid countertransport between the endoplasmic reticulum and the plasma membrane: specifically exchanges phosphatidylserine with phosphatidylinositol 4-phosphate (PI4P), delivering phosphatidylserine to the plasma membrane in exchange for PI4P, which is degraded by the SAC1/SACM1L phosphatase in the endoplasmic reticulum. Binds phosphatidylserine and PI4P in a mutually exclusive manner. Binds oxysterol, 25-hydroxycholesterol and cholesterol. In Homo sapiens (Human), this protein is Oxysterol-binding protein-related protein 8 (OSBPL8).